We begin with the raw amino-acid sequence, 261 residues long: MGYSKRFALYISVMILIFAIAGCGKSDETKEGSKEEQIKKSFAKTLDMYPIKNLEDLYDKEGYRDGEFKKGDKGTWVISSVMVKQPKGEIMKSRGMYLFLNRNTRTAKGYFIVDETSNDTLKKTEDKEKRYPVKMVNNKIVPIDPINDKGVKKEIENFKFFSQYGDFKELKNYKNGEVSYNSEAPIYSAKYQLKNNDYNVKQLRKRYDISTEKAPKLLLKGTGDLKGSSIGHKDIEFTFVENQEENIFFTDSLEFTSSENY.

A signal peptide spans 1–22 (MGYSKRFALYISVMILIFAIAG). Cysteine 23 carries N-palmitoyl cysteine lipidation. Cysteine 23 carries the S-diacylglycerol cysteine lipid modification.

This sequence belongs to the staphylococcal tandem lipoprotein family.

The protein localises to the cell membrane. This is an uncharacterized protein from Staphylococcus aureus (strain N315).